The primary structure comprises 251 residues: Hydroxyacylglutathione hydrolase (251 aa).

Zn(2+) is bound by residues His-53, His-55, Asp-57, His-58, His-110, Asp-127, and His-165.

It belongs to the metallo-beta-lactamase superfamily. Glyoxalase II family. As to quaternary structure, monomer. Zn(2+) serves as cofactor.

It carries out the reaction an S-(2-hydroxyacyl)glutathione + H2O = a 2-hydroxy carboxylate + glutathione + H(+). It participates in secondary metabolite metabolism; methylglyoxal degradation; (R)-lactate from methylglyoxal: step 2/2. Its function is as follows. Thiolesterase that catalyzes the hydrolysis of S-D-lactoyl-glutathione to form glutathione and D-lactic acid. In Shigella boydii serotype 18 (strain CDC 3083-94 / BS512), this protein is Hydroxyacylglutathione hydrolase.